We begin with the raw amino-acid sequence, 102 residues long: Large ribosomal subunit protein bL21 (102 aa).

This sequence belongs to the bacterial ribosomal protein bL21 family. Part of the 50S ribosomal subunit. Contacts protein L20.

This protein binds to 23S rRNA in the presence of protein L20. The protein is Large ribosomal subunit protein bL21 of Listeria monocytogenes serotype 4b (strain F2365).